A 180-amino-acid chain; its full sequence is Glycodelin (180 aa).

The first 18 residues, M1–A18, serve as a signal peptide directing secretion. 2 N-linked (GlcNAc...) (complex) asparagine glycosylation sites follow: N46 and N81. Intrachain disulfides connect C84–C178 and C124–C137.

Belongs to the calycin superfamily. Lipocalin family. In terms of assembly, homodimer. In terms of processing, four distinct glycoforms A, C, F and S arise from different N-linked oligosaccharide chains at amino acid residues Asn-46 and Asn-81. Glycodelin-A and -F are taken up by the cumulus cells in which partial deglycosylation takes place to produce glycodelin-C. In terms of tissue distribution, this protein is, the main protein synthesized and secreted in the endometrium from mid-luteal phase of the menstrual cycle and during the first semester of pregnancy. Glycodelin-A is expressed in amniotic fluid, endometrium/decidua and maternal serum (at protein level). Glycodelin-F is expressed in follicular fluid, luteinized granulosa cells and the oviduct (at protein level). Glycodelin-S is expressed in seminal plasma and seminal vesicles (at protein level). Glycodelin-C is detected in cumulus cells (at protein level), but cumulus cells do not synthesize Glycodelin-C but take up and convert glycodelin-A and -F vis glycan remodeling.

Its subcellular location is the secreted. Functionally, glycoprotein that regulates critical steps during fertilization and also has immunomonomodulatory effects. Four glycoforms, namely glycodelin-S, -A, -F and -C have been identified in reproductive tissues that differ in glycosylation and biological activity. Glycodelin-A has contraceptive and immunosuppressive activities. Glycodelin-C stimulates binding of spermatozoa to the zona pellucida. Glycodelin-F inhibits spermatozoa-zona pellucida binding and significantly suppresses progesterone-induced acrosome reaction of spermatozoa. Glycodelin-S in seminal plasma maintains the uncapacitated state of human spermatozoa. The protein is Glycodelin (PAEP) of Homo sapiens (Human).